Consider the following 2387-residue polypeptide: Paternally-expressed gene 3 protein (2387 aa).

The SCAN box domain occupies 44 to 126; the sequence is HQRFRNFLYV…ALLEDYEAMY (83 aa). Disordered stretches follow at residues 127 to 194, 262 to 305, 321 to 371, and 392 to 423; these read EPED…RDLA, DGHS…ICEA, ARSS…AFGG, and RYHF…EARR. 4 stretches are compositionally biased toward basic and acidic residues: residues 160-179, 291-305, 321-364, and 404-423; these read SERE…DRWP, PETK…ICEA, ARSS…ERGP, and HDPR…EARR. The C2H2-type 1 zinc-finger motif lies at 451–473; it reads YVCDECGRSFAVISEFVEHQIVH. The segment at 492-542 is disordered; it reads SEAQSRPEGARRSEGAQAAGLAEHRGGQAQEHLRGSGDEEQDEPFLPSPTF. Basic and acidic residues predominate over residues 513–528; it reads AEHRGGQAQEHLRGSG. 2 C2H2-type zinc fingers span residues 555–577 and 610–632; these read YECK…QKIH and YECK…QKTH. The segment at 668-690 adopts a C2H2-type 4; degenerate zinc-finger fold; the sequence is YDFREGGDAFGRSSDFMEHQKIH. Disordered regions lie at residues 704–747, 764–797, and 820–858; these read PLLH…EARG, FRPP…ESPY, and DHLA…NIER. Polar residues predominate over residues 711–720; that stretch reads MPGSQKSHTI. Residues 846–856 show a composition bias toward basic residues; that stretch reads HQKARAKKKNI. The C2H2-type 5 zinc-finger motif lies at 884–906; that stretch reads YECLECGEFFVRSSELAEHQKIH. Repeat copies occupy residues 965 to 973, 974 to 982, 983 to 991, 1001 to 1009, 1010 to 1018, 1028 to 1036, 1046 to 1054, 1055 to 1063, 1073 to 1081, 1091 to 1099, 1109 to 1117, 1118 to 1126, 1136 to 1144, 1145 to 1153, 1154 to 1162, 1163 to 1171, 1172 to 1180, 1190 to 1198, 1199 to 1207, 1217 to 1225, 1235 to 1243, 1253 to 1261, 1280 to 1288, 1289 to 1297, 1298 to 1306, 1307 to 1315, 1316 to 1324, 1325 to 1333, 1334 to 1342, 1343 to 1351, 1352 to 1360, 1361 to 1369, 1370 to 1378, 1379 to 1387, 1388 to 1396, 1397 to 1405, 1406 to 1414, 1415 to 1423, 1424 to 1432, 1433 to 1441, 1442 to 1450, 1451 to 1459, 1460 to 1468, 1469 to 1477, 1478 to 1486, 1496 to 1504, 1505 to 1513, 1514 to 1522, 1523 to 1531, 1532 to 1540, 1541 to 1549, 1550 to 1558, 1559 to 1567, 1568 to 1576, 1577 to 1585, 1586 to 1594, and 1595 to 1603. Polar residues-rich tracts occupy residues 965–989 and 1001–1020; these read PAQT…TSYT and PAQT…NPAA. The segment at 965–1603 is 37 X 9 AA repeat of P-A-Q-T-X-Y-X-X-E; it reads PAQTSYAVEP…EPAQTSYSEE (639 aa). The interval 965–1651 is disordered; that stretch reads PAQTSYAVEP…RPDMPRNQPR (687 aa). The span at 1046–1079 shows a compositional bias: polar residues; sequence PAQTSCIEEPAQTSYTNPAAETSYTEEPAQTSYT. 5 stretches are compositionally biased toward polar residues: residues 1107-1178, 1190-1206, 1217-1242, 1251-1484, and 1496-1601; these read EEPS…TSYT, PAQT…NYTK, PAQT…NYTV, EEPS…TNYT, and PAQT…TSYS. A C2H2-type 6; degenerate zinc finger spans residues 1859 to 1881; that stretch reads NECKECGECFATVEDLGRHQKIY. The disordered stretch occupies residues 1900 to 1921; sequence LGLDGSPEEELEEQEEPEEPED. Positions 1905–1921 are enriched in acidic residues; that stretch reads SPEEELEEQEEPEEPED. 5 consecutive C2H2-type zinc fingers follow at residues 1924–1946, 1980–2002, 2040–2062, 2097–2119, and 2148–2170; these read YGCK…QKVH, YECP…QKVH, PQCQ…ARGH, YECE…MRVH, and YECK…QKLH. The interval 2059–2102 is disordered; sequence ARGHAGEGLPDQGQGGAGAAGPGPAPTEPQQDPGEEQRYECETC. Positions 2204-2322 are disordered; the sequence is NVEAAEPEVE…DCGECGETFP (119 aa). Acidic residues-rich tracts occupy residues 2208–2228 and 2257–2311; these read AEPE…EVEA and EQPD…EEPY. 2 consecutive C2H2-type zinc fingers follow at residues 2312–2334 and 2363–2385; these read YDCG…LTAH and FKCD…QNTH.

The protein belongs to the krueppel C2H2-type zinc-finger protein family. Homodimer. Interacts with SIAH1A and SIAH2. Interacts with TRAF2. Expressed at high levels in the cerebellum and at moderate levels in the testis and ovary.

The protein resides in the nucleus. Its subcellular location is the cytoplasm. Induces apoptosis in cooperation with SIAH1A. Acts as a mediator between p53/TP53 and BAX in a neuronal death pathway that is activated by DNA damage. Acts synergistically with TRAF2 and inhibits TNF induced apoptosis through activation of NF-kappa-B. This Bos taurus (Bovine) protein is Paternally-expressed gene 3 protein (PEG3).